Consider the following 362-residue polypeptide: Spermidine/putrescine import ATP-binding protein PotA (362 aa).

Residues 6 to 236 (VELKHVGKRY…PVNHFVADFI (231 aa)) form the ABC transporter domain. 38-45 (GPSGSGKT) is a binding site for ATP.

It belongs to the ABC transporter superfamily. Spermidine/putrescine importer (TC 3.A.1.11.1) family. In terms of assembly, the complex is composed of two ATP-binding proteins (PotA), two transmembrane proteins (PotB and PotC) and a solute-binding protein (PotD).

It localises to the cell membrane. The catalysed reaction is ATP + H2O + polyamine-[polyamine-binding protein]Side 1 = ADP + phosphate + polyamineSide 2 + [polyamine-binding protein]Side 1.. In terms of biological role, part of the ABC transporter complex PotABCD involved in spermidine/putrescine import. Responsible for energy coupling to the transport system. The polypeptide is Spermidine/putrescine import ATP-binding protein PotA (Lacticaseibacillus paracasei (strain ATCC 334 / BCRC 17002 / CCUG 31169 / CIP 107868 / KCTC 3260 / NRRL B-441) (Lactobacillus paracasei)).